Reading from the N-terminus, the 289-residue chain is Homoserine kinase (289 aa).

Position 79-89 (79-89 (PLARGLGSSSS)) interacts with ATP.

Belongs to the GHMP kinase family. Homoserine kinase subfamily.

The protein localises to the cytoplasm. It carries out the reaction L-homoserine + ATP = O-phospho-L-homoserine + ADP + H(+). The protein operates within amino-acid biosynthesis; L-threonine biosynthesis; L-threonine from L-aspartate: step 4/5. Functionally, catalyzes the ATP-dependent phosphorylation of L-homoserine to L-homoserine phosphate. The chain is Homoserine kinase from Streptococcus pneumoniae (strain Taiwan19F-14).